We begin with the raw amino-acid sequence, 161 residues long: Nucleotide-binding protein Gmet_3206 (161 aa).

Belongs to the YajQ family.

Nucleotide-binding protein. This Geobacter metallireducens (strain ATCC 53774 / DSM 7210 / GS-15) protein is Nucleotide-binding protein Gmet_3206.